Consider the following 469-residue polypeptide: Ribosomal protein uS12 methylthiotransferase RimO (469 aa).

An MTTase N-terminal domain is found at 34-144 (NKIGFVSLGC…VLEHVHQFAP (111 aa)). The [4Fe-4S] cluster site is built by C43, C79, C108, C176, C180, and C183. Positions 162-399 (LTPKHYAYLK…MLVQQEISAA (238 aa)) constitute a Radical SAM core domain. The 67-residue stretch at 402–468 (QKRIGSTMKV…EYDLWGSLVR (67 aa)) folds into the TRAM domain.

This sequence belongs to the methylthiotransferase family. RimO subfamily. [4Fe-4S] cluster is required as a cofactor.

The protein localises to the cytoplasm. It catalyses the reaction L-aspartate(89)-[ribosomal protein uS12]-hydrogen + (sulfur carrier)-SH + AH2 + 2 S-adenosyl-L-methionine = 3-methylsulfanyl-L-aspartate(89)-[ribosomal protein uS12]-hydrogen + (sulfur carrier)-H + 5'-deoxyadenosine + L-methionine + A + S-adenosyl-L-homocysteine + 2 H(+). Its function is as follows. Catalyzes the methylthiolation of an aspartic acid residue of ribosomal protein uS12. In Vibrio vulnificus (strain YJ016), this protein is Ribosomal protein uS12 methylthiotransferase RimO.